Here is a 227-residue protein sequence, read N- to C-terminus: MSHTEVKLKIPFGNKLLDAVCLVPNKSLTYGIILTHGASGDMNLPHLMSLASHLASHGFFCLRFTCKGLNIVHRIKAYKSVLNYLKTSGEYKLAGVFLGGRSMGSRAAASVMCHIEPDDGDDFVRGLICISYPLHHPKQQHKLRDEDLFRLKEPVLFVSGSADEMCEKNLLEKVAQKMQAPHKIHWIEKANHSMAVKGRSTNDVFKEINTQILFWIQEITEMDKKCH.

The polypeptide is Testis-expressed protein 30 (TEX30) (Homo sapiens (Human)).